The sequence spans 212 residues: dITP/XTP pyrophosphatase (212 aa).

7-12 (SNNAKK) provides a ligand contact to substrate. Mg(2+) is bound by residues Glu39 and Asp68. Asp68 serves as the catalytic Proton acceptor. Substrate is bound by residues Ser69, 165–168 (FGYD), Lys188, and 193–194 (HR).

The protein belongs to the HAM1 NTPase family. Homodimer. It depends on Mg(2+) as a cofactor.

The catalysed reaction is XTP + H2O = XMP + diphosphate + H(+). The enzyme catalyses dITP + H2O = dIMP + diphosphate + H(+). It catalyses the reaction ITP + H2O = IMP + diphosphate + H(+). Its function is as follows. Pyrophosphatase that catalyzes the hydrolysis of nucleoside triphosphates to their monophosphate derivatives, with a high preference for the non-canonical purine nucleotides XTP (xanthosine triphosphate), dITP (deoxyinosine triphosphate) and ITP. Seems to function as a house-cleaning enzyme that removes non-canonical purine nucleotides from the nucleotide pool, thus preventing their incorporation into DNA/RNA and avoiding chromosomal lesions. The chain is dITP/XTP pyrophosphatase from Leptothrix cholodnii (strain ATCC 51168 / LMG 8142 / SP-6) (Leptothrix discophora (strain SP-6)).